The sequence spans 398 residues: Metallophosphoesterase 1 (398 aa).

A helical transmembrane segment spans residues 25 to 45 (VCFVSSVLIFCEFFIYYLVIF). The a divalent metal cation site is built by aspartate 75, aspartate 117, asparagine 155, histidine 251, histidine 305, and histidine 307. The chain crosses the membrane as a helical span at residues 359–379 (VFAIYWAAGALLVVLVLAHFQ). Residues 394–398 (KHKAA) carry the Di-lysine motif motif.

The protein belongs to the metallophosphoesterase superfamily. MPPE1 family. The cofactor is Mn(2+).

It localises to the endoplasmic reticulum-Golgi intermediate compartment membrane. In terms of biological role, metallophosphoesterase that catalyzes the removal of a side-chain ethanolamine-phosphate (EtNP) from the second mannose of the GPI-anchor protein intermediate. Participates in the glycan remodeling steps of GPI-anchor maturation to allow an efficient transport of GPI-anchor proteins from the endoplasmic reticulum to the Golgi. This is Metallophosphoesterase 1 from Gallus gallus (Chicken).